Reading from the N-terminus, the 250-residue chain is Small ribosomal subunit protein uS3 (250 aa).

The region spanning Ile-39–Lys-111 is the KH type-2 domain.

The protein belongs to the universal ribosomal protein uS3 family. Part of the 30S ribosomal subunit. Forms a tight complex with proteins S10 and S14.

Binds the lower part of the 30S subunit head. Binds mRNA in the 70S ribosome, positioning it for translation. This chain is Small ribosomal subunit protein uS3, found in Ziziphus jujuba witches'-broom phytoplasma.